The sequence spans 148 residues: Large ribosomal subunit protein bL9 (148 aa).

The protein belongs to the bacterial ribosomal protein bL9 family.

Binds to the 23S rRNA. This chain is Large ribosomal subunit protein bL9, found in Alkaliphilus oremlandii (strain OhILAs) (Clostridium oremlandii (strain OhILAs)).